We begin with the raw amino-acid sequence, 402 residues long: S-adenosylmethionine synthase (402 aa).

Position 137-142 (137-142 (GQGSAD)) interacts with ATP.

The protein belongs to the AdoMet synthase 2 family. It depends on Mg(2+) as a cofactor.

It carries out the reaction L-methionine + ATP + H2O = S-adenosyl-L-methionine + phosphate + diphosphate. It functions in the pathway amino-acid biosynthesis; S-adenosyl-L-methionine biosynthesis; S-adenosyl-L-methionine from L-methionine: step 1/1. In terms of biological role, catalyzes the formation of S-adenosylmethionine from methionine and ATP. This Pyrobaculum islandicum (strain DSM 4184 / JCM 9189 / GEO3) protein is S-adenosylmethionine synthase.